Consider the following 185-residue polypeptide: dTTP/UTP pyrophosphatase (185 aa).

Residue Asp-67 is the Proton acceptor of the active site.

Belongs to the Maf family. YhdE subfamily. It depends on a divalent metal cation as a cofactor.

The protein localises to the cytoplasm. The enzyme catalyses dTTP + H2O = dTMP + diphosphate + H(+). The catalysed reaction is UTP + H2O = UMP + diphosphate + H(+). Nucleoside triphosphate pyrophosphatase that hydrolyzes dTTP and UTP. May have a dual role in cell division arrest and in preventing the incorporation of modified nucleotides into cellular nucleic acids. In Lacticaseibacillus casei (strain BL23) (Lactobacillus casei), this protein is dTTP/UTP pyrophosphatase.